An 864-amino-acid polypeptide reads, in one-letter code: Leucine--tRNA ligase (864 aa).

The 'HIGH' region motif lies at 42–52; it reads PYPSGKLHMGH. The 'KMSKS' region signature appears at 624–628; that stretch reads KMSKS. Lysine 627 is a binding site for ATP.

This sequence belongs to the class-I aminoacyl-tRNA synthetase family.

The protein localises to the cytoplasm. It catalyses the reaction tRNA(Leu) + L-leucine + ATP = L-leucyl-tRNA(Leu) + AMP + diphosphate. This is Leucine--tRNA ligase from Burkholderia multivorans (strain ATCC 17616 / 249).